The following is a 317-amino-acid chain: uncharacterized protein (317 aa).

The Cytoplasmic segment spans residues 1-13; sequence MKRVTGVFLTLLR. A helical transmembrane segment spans residues 14 to 34; sequence FSQFASSVLVMSLLAYAIHAY. Over 35 to 49 the chain is Extracellular; that stretch reads GNRGNKKTNFTLATG. An N-linked (GlcNAc...) asparagine glycan is attached at asparagine 43. A helical transmembrane segment spans residues 50–70; it reads VISVFYLIALGILCLALPTLI. A topological domain (cytoplasmic) is located at residue tyrosine 71. Residues 72-92 form a helical membrane-spanning segment; sequence IGMYFCAELIVCMLWLAAFVV. Topologically, residues 93–133 are extracellular; the sequence is LAKAQGERSCSNTNADGLYYNPYSGQYTADSHRRACNSSQA. N-linked (GlcNAc...) asparagine glycosylation is present at asparagine 129. A helical transmembrane segment spans residues 134-154; the sequence is AIAFSGLCFVLFLISVILLGI. Topologically, residues 155-317 are cytoplasmic; it reads NVLTPIRKRY…EPNRNVNQMP (163 aa). Positions 204-317 are disordered; it reads RTGDVEAGAG…EPNRNVNQMP (114 aa). Residues 239–250 show a composition bias toward low complexity; that stretch reads TTTTNTRYTTTT. The segment covering 256 to 282 has biased composition (polar residues); that stretch reads RYTTNDRNPGSANVANSAVDQHAYSTD. Residues 284-295 show a composition bias toward basic and acidic residues; the sequence is SGDRSYQEKVTE. The segment covering 302 to 317 has biased composition (polar residues); sequence MSGSTAEPNRNVNQMP.

The protein resides in the membrane. This is an uncharacterized protein from Saccharomyces cerevisiae (strain ATCC 204508 / S288c) (Baker's yeast).